The chain runs to 258 residues: Small ribosomal subunit protein uS2 (258 aa).

It belongs to the universal ribosomal protein uS2 family.

This is Small ribosomal subunit protein uS2 from Leuconostoc mesenteroides subsp. mesenteroides (strain ATCC 8293 / DSM 20343 / BCRC 11652 / CCM 1803 / JCM 6124 / NCDO 523 / NBRC 100496 / NCIMB 8023 / NCTC 12954 / NRRL B-1118 / 37Y).